A 290-amino-acid chain; its full sequence is Protoheme IX farnesyltransferase 1 (290 aa).

The next 8 helical transmembrane spans lie at 8-28, 36-56, 85-105, 108-128, 131-151, 152-172, 211-231, and 269-289; these read ITKPGIIFGNLISVAAGFFLA, FLLLLTTLVGVGLVIASGCVV, AAFVYALVLLLNGTALLFQVV, LSAVVVLLGYVFYVFFYTMWY, NSVYGTLVGSISGAVPPLVGY, LAVTNYISLEATLLFVMFCLW, AYVVAFGVVAIGLFMLGEAGY, and LLVVMGISGVLGLELIPLPFI.

This sequence belongs to the UbiA prenyltransferase family. Protoheme IX farnesyltransferase subfamily.

The protein resides in the cell inner membrane. The enzyme catalyses heme b + (2E,6E)-farnesyl diphosphate + H2O = Fe(II)-heme o + diphosphate. The protein operates within porphyrin-containing compound metabolism; heme O biosynthesis; heme O from protoheme: step 1/1. Functionally, converts heme B (protoheme IX) to heme O by substitution of the vinyl group on carbon 2 of heme B porphyrin ring with a hydroxyethyl farnesyl side group. The polypeptide is Protoheme IX farnesyltransferase 1 (Vibrio campbellii (strain ATCC BAA-1116)).